A 435-amino-acid chain; its full sequence is ATP-dependent protease ATPase subunit HslU (435 aa).

ATP contacts are provided by residues Ile-18, Gly-60–Glu-65, Asp-248, Glu-313, and Arg-385.

This sequence belongs to the ClpX chaperone family. HslU subfamily. In terms of assembly, a double ring-shaped homohexamer of HslV is capped on each side by a ring-shaped HslU homohexamer. The assembly of the HslU/HslV complex is dependent on binding of ATP.

The protein localises to the cytoplasm. In terms of biological role, ATPase subunit of a proteasome-like degradation complex; this subunit has chaperone activity. The binding of ATP and its subsequent hydrolysis by HslU are essential for unfolding of protein substrates subsequently hydrolyzed by HslV. HslU recognizes the N-terminal part of its protein substrates and unfolds these before they are guided to HslV for hydrolysis. In Rhizobium johnstonii (strain DSM 114642 / LMG 32736 / 3841) (Rhizobium leguminosarum bv. viciae), this protein is ATP-dependent protease ATPase subunit HslU.